Reading from the N-terminus, the 110-residue chain is Large ribosomal subunit protein uL22 (110 aa).

This sequence belongs to the universal ribosomal protein uL22 family. As to quaternary structure, part of the 50S ribosomal subunit.

Its function is as follows. This protein binds specifically to 23S rRNA; its binding is stimulated by other ribosomal proteins, e.g. L4, L17, and L20. It is important during the early stages of 50S assembly. It makes multiple contacts with different domains of the 23S rRNA in the assembled 50S subunit and ribosome. In terms of biological role, the globular domain of the protein is located near the polypeptide exit tunnel on the outside of the subunit, while an extended beta-hairpin is found that lines the wall of the exit tunnel in the center of the 70S ribosome. The polypeptide is Large ribosomal subunit protein uL22 (Baumannia cicadellinicola subsp. Homalodisca coagulata).